Reading from the N-terminus, the 419-residue chain is UDP-N-acetylglucosamine 1-carboxyvinyltransferase (419 aa).

22 to 23 (KN) is a binding site for phosphoenolpyruvate. R91 contributes to the UDP-N-acetyl-alpha-D-glucosamine binding site. The active-site Proton donor is the C115. C115 carries the post-translational modification 2-(S-cysteinyl)pyruvic acid O-phosphothioketal. UDP-N-acetyl-alpha-D-glucosamine contacts are provided by residues 120–124 (RPVDL), 160–163 (KVSV), D305, and I327.

The protein belongs to the EPSP synthase family. MurA subfamily.

It is found in the cytoplasm. It carries out the reaction phosphoenolpyruvate + UDP-N-acetyl-alpha-D-glucosamine = UDP-N-acetyl-3-O-(1-carboxyvinyl)-alpha-D-glucosamine + phosphate. It participates in cell wall biogenesis; peptidoglycan biosynthesis. Cell wall formation. Adds enolpyruvyl to UDP-N-acetylglucosamine. The sequence is that of UDP-N-acetylglucosamine 1-carboxyvinyltransferase from Klebsiella pneumoniae (strain 342).